The chain runs to 477 residues: ATP synthase subunit beta (477 aa).

155 to 162 (GGAGVGKT) lines the ATP pocket.

Belongs to the ATPase alpha/beta chains family. In terms of assembly, F-type ATPases have 2 components, CF(1) - the catalytic core - and CF(0) - the membrane proton channel. CF(1) has five subunits: alpha(3), beta(3), gamma(1), delta(1), epsilon(1). CF(0) has three main subunits: a(1), b(2) and c(9-12). The alpha and beta chains form an alternating ring which encloses part of the gamma chain. CF(1) is attached to CF(0) by a central stalk formed by the gamma and epsilon chains, while a peripheral stalk is formed by the delta and b chains.

It localises to the cell inner membrane. The catalysed reaction is ATP + H2O + 4 H(+)(in) = ADP + phosphate + 5 H(+)(out). Its function is as follows. Produces ATP from ADP in the presence of a proton gradient across the membrane. The catalytic sites are hosted primarily by the beta subunits. The protein is ATP synthase subunit beta of Mesorhizobium japonicum (strain LMG 29417 / CECT 9101 / MAFF 303099) (Mesorhizobium loti (strain MAFF 303099)).